Consider the following 563-residue polypeptide: Coiled-coil domain-containing protein 38 (563 aa).

3 coiled-coil regions span residues 129-212 (KRNT…KTEF), 384-415 (NIEFLLEQEEMLKANCVREEEKAAELQLRSRL), and 485-522 (ERMKQKERRQKFRDEKMREKQRHQEERLKAALEKAVAQ). Residues 521-550 (AQPKKKLGRRLVYHSKPPSANKQQLPLVNE) form a disordered region. Basic residues predominate over residues 523–533 (PKKKLGRRLVY).

As to quaternary structure, interacts with CCDC42, CFAP53, IFT88 and ODF2. Interacts with CCDC146. Interacts with TEKT3. Interacts with ubiquitinated histone H2A.

It is found in the cytoplasm. The protein localises to the cytoskeleton. Its subcellular location is the microtubule organizing center. The protein resides in the centrosome. It localises to the perinuclear region. It is found in the cell projection. The protein localises to the cilium. Its subcellular location is the flagellum. Essential for male fertility. Required for sperm flagellum biogenesis. Also required for acrosome biogenesis. Required for the attachment of developing acrosomes to the nucleus during spermiogenesis and may be involved in the transport of fibrous sheath components. This is Coiled-coil domain-containing protein 38 (CCDC38) from Macaca fascicularis (Crab-eating macaque).